Consider the following 295-residue polypeptide: UDP-N-acetylenolpyruvoylglucosamine reductase (295 aa).

Positions 24 to 188 (KVGGNAEIFF…LKVIFKINKG (165 aa)) constitute an FAD-binding PCMH-type domain. The active site involves Arg168. Ser217 (proton donor) is an active-site residue. Glu287 is an active-site residue.

Belongs to the MurB family. Requires FAD as cofactor.

The protein localises to the cytoplasm. The catalysed reaction is UDP-N-acetyl-alpha-D-muramate + NADP(+) = UDP-N-acetyl-3-O-(1-carboxyvinyl)-alpha-D-glucosamine + NADPH + H(+). It participates in cell wall biogenesis; peptidoglycan biosynthesis. Functionally, cell wall formation. This Rickettsia rickettsii (strain Iowa) protein is UDP-N-acetylenolpyruvoylglucosamine reductase.